The following is a 323-amino-acid chain: tRNA-dihydrouridine(16) synthase (323 aa).

FMN is bound by residues 7–9 (PME) and Gln-68. The active-site Proton donor is the Cys-98. FMN is bound by residues Lys-139, 200–202 (NGE), and 224–225 (CR).

This sequence belongs to the Dus family. DusC subfamily. It depends on FMN as a cofactor.

It carries out the reaction 5,6-dihydrouridine(16) in tRNA + NADP(+) = uridine(16) in tRNA + NADPH + H(+). The catalysed reaction is 5,6-dihydrouridine(16) in tRNA + NAD(+) = uridine(16) in tRNA + NADH + H(+). Its function is as follows. Catalyzes the synthesis of 5,6-dihydrouridine (D), a modified base found in the D-loop of most tRNAs, via the reduction of the C5-C6 double bond in target uridines. Specifically modifies U16 in tRNAs. This Vibrio cholerae serotype O1 (strain ATCC 39315 / El Tor Inaba N16961) protein is tRNA-dihydrouridine(16) synthase.